The primary structure comprises 287 residues: uncharacterized protein (287 aa).

One can recognise a THUMP domain in the interval 133-239 (CEVGKTKKMT…KNIIGISIVQ (107 aa)). The disordered stretch occupies residues 257-287 (ENTKSIPNDSKLDNFDRDKNQIINDKAEHAE). The span at 266–287 (SKLDNFDRDKNQIINDKAEHAE) shows a compositional bias: basic and acidic residues.

This is an uncharacterized protein from Schizosaccharomyces pombe (strain 972 / ATCC 24843) (Fission yeast).